The primary structure comprises 471 residues: 6-phosphofructo-2-kinase/fructose-2,6-bisphosphatase 1 (471 aa).

Ser2 bears the N-acetylserine mark. Residues 2 to 250 (SPEMGELTQT…VYYLMNIHVT (249 aa)) are 6-phosphofructo-2-kinase. Position 33 is a phosphoserine; by PKA (Ser33). Position 49 to 57 (49 to 57 (GLPARGKTY)) interacts with ATP. 2 residues coordinate beta-D-fructose 6-phosphate: Arg82 and Arg105. Asp131 is a catalytic residue. Beta-D-fructose 6-phosphate contacts are provided by Thr133 and Arg139. Ser141 is modified (phosphoserine). Residue Cys161 is part of the active site. 170–175 (NIRQVK) lines the ATP pocket. Residues Lys175, Arg196, and Tyr200 each contribute to the beta-D-fructose 6-phosphate site. Residues 251 to 471 (PRSIYLCRHG…EALDTVPAHY (221 aa)) form a fructose-2,6-bisphosphatase region. Arg258 serves as a coordination point for beta-D-fructose 2,6-bisphosphate. Catalysis depends on His259, which acts as the Tele-phosphohistidine intermediate. 3 residues coordinate beta-D-fructose 2,6-bisphosphate: Asn265, Gly271, and Arg308. Residue Glu328 is the Proton donor/acceptor of the active site. Tyr339, Arg353, Lys357, Tyr368, Gln394, and Arg398 together coordinate beta-D-fructose 2,6-bisphosphate. Residue 350-353 (FALR) participates in ATP binding. ATP contacts are provided by residues 394-398 (QAVMR) and Tyr430.

In the C-terminal section; belongs to the phosphoglycerate mutase family. In terms of assembly, homodimer. Liver.

The catalysed reaction is beta-D-fructose 2,6-bisphosphate + H2O = beta-D-fructose 6-phosphate + phosphate. It carries out the reaction beta-D-fructose 6-phosphate + ATP = beta-D-fructose 2,6-bisphosphate + ADP + H(+). Phosphorylation at Ser-33 inhibits the kinase and activates the bisphosphatase. Functionally, synthesis and degradation of fructose 2,6-bisphosphate. This is 6-phosphofructo-2-kinase/fructose-2,6-bisphosphatase 1 from Homo sapiens (Human).